Reading from the N-terminus, the 488-residue chain is UDP-N-acetylmuramoyl-L-alanyl-D-glutamate--2,6-diaminopimelate ligase (488 aa).

Residues Leu-24, Ser-26, and 41–43 (HQV) each bind UDP-N-acetyl-alpha-D-muramoyl-L-alanyl-D-glutamate. Position 113–119 (113–119 (GTNGKTT)) interacts with ATP. UDP-N-acetyl-alpha-D-muramoyl-L-alanyl-D-glutamate contacts are provided by residues Asn-154, 155–156 (TT), Ser-182, Gln-188, and Arg-190. Lys-222 carries the post-translational modification N6-carboxylysine. Meso-2,6-diaminopimelate-binding positions include Arg-386, 410-413 (DNPR), Gly-461, and Glu-465. The short motif at 410–413 (DNPR) is the Meso-diaminopimelate recognition motif element.

The protein belongs to the MurCDEF family. MurE subfamily. Mg(2+) serves as cofactor. In terms of processing, carboxylation is probably crucial for Mg(2+) binding and, consequently, for the gamma-phosphate positioning of ATP.

It localises to the cytoplasm. It catalyses the reaction UDP-N-acetyl-alpha-D-muramoyl-L-alanyl-D-glutamate + meso-2,6-diaminopimelate + ATP = UDP-N-acetyl-alpha-D-muramoyl-L-alanyl-gamma-D-glutamyl-meso-2,6-diaminopimelate + ADP + phosphate + H(+). The protein operates within cell wall biogenesis; peptidoglycan biosynthesis. Functionally, catalyzes the addition of meso-diaminopimelic acid to the nucleotide precursor UDP-N-acetylmuramoyl-L-alanyl-D-glutamate (UMAG) in the biosynthesis of bacterial cell-wall peptidoglycan. This is UDP-N-acetylmuramoyl-L-alanyl-D-glutamate--2,6-diaminopimelate ligase from Haemophilus influenzae (strain PittEE).